Here is a 107-residue protein sequence, read N- to C-terminus: UPF0145 protein YbjQ (107 aa).

It belongs to the UPF0145 family.

The protein is UPF0145 protein YbjQ of Escherichia coli O139:H28 (strain E24377A / ETEC).